Reading from the N-terminus, the 882-residue chain is MSGLTLGGGGSGGVRPTQPAAFASLQDSADADRRSSTTTSNNPPPLPSDFSQLSDDFSFGSPISPPHSSNAPDSLLHDSLFPEWKVGTPRAGFDGPDEMQRKDPLATQIWKLYSRTKAQLPNQERMENLTWRMMAMSLKRKERERAQQSRSASARNSVSGPSGIAQLTSPPLIASRPTRQNPSLSTDLTSDPMNLERIFIVPFESPSDHPSPQLTKGEATSAAIPIKSRKDQVAESTPVPASFPHPPQDQRKNSEFGYVPRRVRKTSIDDRQFFNLQVPTRKRPAEASPQVPPVSNAMLAQDPDLSGGVPDYALDASSAFALHHNNHSSSHHNHTSPGMPFGLDTYGLGEDPILTSAGPYQTQFTFSPTESPMTSGNPFANLYAHTPVASSLNSTDFFSPPQSGYQSTASTPQPAYDGEHSMFFDMPSVDARTQRRVPNYVSHRTSNLSASLQPRYMFNQNQDQSHHTGNHSSSMHSPGYPIPQPQHVDPTQVLNPNDFSTGASHAAMFSFGADSDNEDDDGNQFSDRAGLTMPGDLDDGADMNGGMQWDAQFPGSFHSLPGFTAQHRKHVTIGPTDMMDTPSEWAQSGSLGRTHGSAASVSEVRNREQDPRRQKIARTTSTPNTAQLLRQSMNANTSHTSPNTPPESGLSSAVPSRPASPGGSKNGEQSSGPTTCTNCFTQTTPLWRRNPEGQPLCNACGLFLKLHGVVRPLSLKTDVIKKRNRSSANSLAVGTSRASKKSARKNSVQQTTVTTPTSSRAQSGATSFGVRRPRAGAVRRAEPLVPIAAAPPKANPTTSSPGQSRGTSSVQMAPKRQRRLEKATDAEAGGDEASKSSTASGGRSKVVALAPAMPPAAANPANHSIAGGQGASQEWEWLTMSL.

The segment covering 1–13 (MSGLTLGGGGSGG) has biased composition (gly residues). Disordered regions lie at residues 1–75 (MSGL…PDSL), 139–191 (KRKE…LTSD), 228–257 (SRKDQVAESTPVPASFPHPPQDQRKNSEFG), 325–344 (NNHSSSHHNHTSPGMPFGLD), 394–422 (STDFFSPPQSGYQSTASTPQPAYDGEHSM), 461–545 (NQDQ…DMNG), and 579–675 (MDTP…GPTT). The segment covering 48-59 (SDFSQLSDDFSF) has biased composition (low complexity). Polar residues-rich tracts occupy residues 156-169 (NSVSGPSGIAQLTS) and 177-191 (PTRQNPSLSTDLTSD). The span at 325–334 (NNHSSSHHNH) shows a compositional bias: basic residues. 2 stretches are compositionally biased toward polar residues: residues 394 to 413 (STDFFSPPQSGYQSTASTPQ) and 492 to 503 (QVLNPNDFSTGA). The segment covering 604 to 613 (VRNREQDPRR) has biased composition (basic and acidic residues). Residues 617–642 (ARTTSTPNTAQLLRQSMNANTSHTSP) show a composition bias toward polar residues. The segment at 676–700 (CTNCFTQTTPLWRRNPEGQPLCNAC) adopts a GATA-type zinc-finger fold. The disordered stretch occupies residues 723–871 (RNRSSANSLA…NHSIAGGQGA (149 aa)). A compositionally biased stretch (low complexity) spans 745–759 (KNSVQQTTVTTPTSS). Polar residues predominate over residues 795 to 811 (NPTTSSPGQSRGTSSVQ). Over residues 848–861 (ALAPAMPPAAANPA) the composition is skewed to low complexity.

Its subcellular location is the nucleus. Functionally, major nitrogen regulatory protein. Positively acting regulatory gene of nitrogen metabolite repression. This is Nitrogen regulatory protein areA (areA) from Aspergillus niger.